The primary structure comprises 1039 residues: Multidrug resistance protein MdtB (1039 aa).

Transmembrane regions (helical) follow at residues 15–37 (LFIMRPVATTLLMVAILLAGIIG), 345–362 (FELMMAIALVVMIIYLFL), 367–389 (ATIIPGVAVPLSLIGTFAVMVFL), 396–418 (LTLMALTIATGFVVDDAIVVIEN), 438–460 (GEIGFTIISLTFSLIAVLIPLLF), 472–494 (FAITLAVAILISAVVSLTLTPMM), 535–557 (HPWLTLSVALSTLLLSVLLWVFI), 866–888 (VWLIVAAVVAMYIVLGILYESFI), 908–930 (LMIAGSELDVIAIIGIILLIGIV), 967–989 (ILMTTLAALLGALPLMLSTGVGA), and 999–1021 (MVGGLIVSQVLTLFTTPVIYLLF).

It belongs to the resistance-nodulation-cell division (RND) (TC 2.A.6) family. MdtB subfamily. Part of a tripartite efflux system composed of MdtA, MdtB and MdtC. MdtB forms a heteromultimer with MdtC.

It is found in the cell inner membrane. This is Multidrug resistance protein MdtB from Shigella flexneri.